Reading from the N-terminus, the 307-residue chain is Taste receptor type 2 member 10 (307 aa).

The Extracellular portion of the chain corresponds to 1–6; the sequence is MLSVVE. Residues 7–27 form a helical membrane-spanning segment; the sequence is GILILVVISESVFGVLGNGFI. Topologically, residues 28 to 42 are cytoplasmic; the sequence is GLVNCIDCAKNKLST. Residues 43–63 traverse the membrane as a helical segment; the sequence is IGFILTGLAISRIFLIWIIIT. At 64–100 the chain is on the extracellular side; it reads DGFIQIFSPDVYASGNLIEYISYFWVITNQSSIWFAT. N92 carries N-linked (GlcNAc...) asparagine glycosylation. A helical transmembrane segment spans residues 101–121; the sequence is SLSIFYFLKIANFSNYIFLWL. Residues 122–126 lie on the Cytoplasmic side of the membrane; it reads KSRIN. The chain crosses the membrane as a helical span at residues 127–147; it reads RVLPLLMGFLLISCLLNFAYI. Topologically, residues 148-179 are extracellular; sequence VKILNDLKMKNDTVWRLNMYKSEYFIKQLLLN. N-linked (GlcNAc...) asparagine glycosylation is present at N158. Residues 180–200 traverse the membrane as a helical segment; it reads LGVIFFFTLSLITSVLLIISL. The Cytoplasmic segment spans residues 201-227; that stretch reads WRHNRQMQSNVTGLRDSITEAHVKAMK. A helical membrane pass occupies residues 228 to 248; sequence VLISFIILFILYFIGIAIEIS. Residues 249–257 are Extracellular-facing; it reads YFTVPENKL. A helical transmembrane segment spans residues 258–278; that stretch reads LLIFGMTTTAIYPWGHSFILI. The Cytoplasmic portion of the chain corresponds to 279–307; sequence LGNSKLKQASLRVLQQLKCCEERKNLRAT.

Belongs to the G-protein coupled receptor T2R family.

The protein resides in the membrane. Functionally, receptor that may play a role in the perception of bitterness and is gustducin-linked. May play a role in sensing the chemical composition of the gastrointestinal content. The activity of this receptor may stimulate alpha gustducin, mediate PLC-beta-2 activation and lead to the gating of TRPM5. The chain is Taste receptor type 2 member 10 (TAS2R10) from Papio hamadryas (Hamadryas baboon).